The chain runs to 66 residues: Neurotoxin-like protein STR1 (66 aa).

Residues 2–65 enclose the LCN-type CS-alpha/beta domain; that stretch reads RDGYIVHDGT…VWGEDGFMCW (64 aa). Intrachain disulfides connect Cys-13/Cys-64, Cys-17/Cys-40, Cys-26/Cys-45, and Cys-30/Cys-47.

Belongs to the long (4 C-C) scorpion toxin superfamily. Sodium channel inhibitor family. Beta subfamily. In terms of tissue distribution, expressed by the venom gland.

The protein localises to the secreted. Its function is as follows. This protein is not toxic. This chain is Neurotoxin-like protein STR1, found in Androctonus australis (Sahara scorpion).